A 106-amino-acid polypeptide reads, in one-letter code: Valine dehydrogenase (106 aa).

The active site involves K91.

Belongs to the Glu/Leu/Phe/Val dehydrogenases family. As to quaternary structure, homodimer.

It localises to the cytoplasm. It catalyses the reaction L-valine + NAD(+) + H2O = 3-methyl-2-oxobutanoate + NH4(+) + NADH + H(+). Its pathway is amino-acid degradation; L-valine degradation. Functionally, oxidative deamination of branched-chain amino acids. The catabolism of valine is the major source of fatty acid precursors for macrolide biosynthesis and a vital source of antibiotic precursors. The chain is Valine dehydrogenase (vdh) from Streptomyces ambofaciens.